A 27-amino-acid polypeptide reads, in one-letter code: Small ribosomal subunit protein bTHX (27 aa).

Residues 1–13 (MGKGDRRTRRGKI) show a composition bias toward basic residues. The disordered stretch occupies residues 1–27 (MGKGDRRTRRGKIWRGTYGKYRPRKKK).

The protein belongs to the bacterial ribosomal protein bTHX family. In terms of assembly, part of the 30S ribosomal subunit.

In terms of biological role, binds at the top of the head of the 30S subunit. It stabilizes a number of different RNA elements and thus is important for subunit structure. This is Small ribosomal subunit protein bTHX (rpsU) from Thermus aquaticus.